We begin with the raw amino-acid sequence, 412 residues long: Divalent metal cation transporter MntH (412 aa).

The next 11 membrane-spanning stretches (helical) occupy residues 19 to 39 (LALM…GNFA), 46 to 66 (ASFG…AMLI), 94 to 114 (VWFY…AEFI), 122 to 142 (LILG…TFLI), 156 to 176 (VIGG…FFSQ), 196 to 216 (AVFL…IYLH), 241 to 261 (IAMT…AAAF), 290 to 310 (IFGL…TLAG), 322 to 342 (IPLW…ILMG), 348 to 368 (ILVM…VPLL), and 392 to 412 (AIVV…ALGL).

It belongs to the NRAMP family.

It localises to the cell inner membrane. In terms of biological role, h(+)-stimulated, divalent metal cation uptake system. The polypeptide is Divalent metal cation transporter MntH (Cronobacter sakazakii (strain ATCC BAA-894) (Enterobacter sakazakii)).